The chain runs to 468 residues: Pituitary adenylate cyclase-activating polypeptide type I receptor (468 aa).

The signal sequence occupies residues 1–20 (MAGVVHVSLAALLLLPMAPA). The Extracellular portion of the chain corresponds to 21 to 152 (MHSDCIFKKE…TGDQDYYYLS (132 aa)). Cystine bridges form between Cys34/Cys63, Cys54/Cys118, and Cys77/Cys134. Asn48, Asn60, and Asn117 each carry an N-linked (GlcNAc...) asparagine glycan. Positions 125 to 139 (EPFPHYFDACGFDEY) are important for ADCYAP1/PACAP ligand binding and specificity. A helical transmembrane segment spans residues 153–177 (VKALYTVGYSTSLVTLTTAMVILCR). Residues 178–187 (FRKLHCTRNF) lie on the Cytoplasmic side of the membrane. A helical membrane pass occupies residues 188–208 (IHMNLFVSFMLRAISVFIKDW). The Extracellular portion of the chain corresponds to 209-223 (ILYAEQDSNHCFIST). Residues 224–249 (VECKAVMVFFHYCVVSNYFWLFIEGL) form a helical membrane-spanning segment. A disulfide bond links Cys226 and Cys296. The Cytoplasmic segment spans residues 250–267 (YLFTLLVETFFPERRYFY). Residues 268-290 (WYTIIGWGTPTVCVTVWATLRLY) traverse the membrane as a helical segment. Residues 291-302 (FDDTGCWDMNDS) lie on the Extracellular side of the membrane. Asn300 carries N-linked (GlcNAc...) asparagine glycosylation. The chain crosses the membrane as a helical span at residues 303-329 (TALWWVIKGPVVGSIMVNFVLFIGIIV). Over 330–347 (ILVQKLQSPDMGGNESSI) the chain is Cytoplasmic. A helical membrane pass occupies residues 348-374 (YLRLARSTLLLIPLFGIHYTVFAFSPE). The N-linked (GlcNAc...) asparagine glycan is linked to Asn375. The Extracellular portion of the chain corresponds to 375–379 (NVSKR). The helical transmembrane segment at 380–403 (ERLVFELGLGSFQGFVVAVLYCFL) threads the bilayer. Topologically, residues 404–468 (NGEVQAEIKR…SGLPADNLAT (65 aa)) are cytoplasmic. Residues Ser434 and Ser447 each carry the phosphoserine modification.

It belongs to the G-protein coupled receptor 2 family. As to quaternary structure, interacts with maxadilan, a vasodilator peptide from Lutzomyia longipalpis saliva; the interaction results in ADCYAP1R1 activation. In terms of tissue distribution, most abundant in the brain, low expression in the lung, liver, thymus, spleen, pancreas and placenta.

It is found in the cell membrane. With respect to regulation, several synthetic peptides derived from maxadilan, a vasodilator peptide from Lutzomyia longipalpis saliva, act as antagonists for ADCYAP1R1. In terms of biological role, g protein-coupled receptor activated by the neuropeptide pituitary adenylate cyclase-activating polypeptide (ADCYAP1/PACAP). Binds both PACAP27 and PACAP38 bioactive peptides. Ligand binding causes a conformation change that triggers signaling via guanine nucleotide-binding proteins (G proteins) and modulates the activity of downstream effectors. Activates cAMP-dependent pathway. May regulate the release of adrenocorticotropin, luteinizing hormone, growth hormone, prolactin, epinephrine, and catecholamine. May play a role in spermatogenesis and sperm motility. Causes smooth muscle relaxation and secretion in the gastrointestinal tract. In Homo sapiens (Human), this protein is Pituitary adenylate cyclase-activating polypeptide type I receptor.